The sequence spans 344 residues: Dihydroorotate dehydrogenase (quinone) (344 aa).

FMN contacts are provided by residues 65 to 69 and Thr89; that span reads AGLDK. Position 69 (Lys69) interacts with substrate. 114-118 is a binding site for substrate; that stretch reads NRLGF. Positions 145 and 178 each coordinate FMN. Asn178 contributes to the substrate binding site. Ser181 (nucleophile) is an active-site residue. Asn183 is a substrate binding site. FMN-binding residues include Lys223 and Thr251. 252 to 253 lines the substrate pocket; the sequence is NT. FMN-binding positions include Gly274, Gly303, and 324–325; that span reads YT.

The protein belongs to the dihydroorotate dehydrogenase family. Type 2 subfamily. As to quaternary structure, monomer. FMN serves as cofactor.

The protein localises to the cell membrane. The enzyme catalyses (S)-dihydroorotate + a quinone = orotate + a quinol. It functions in the pathway pyrimidine metabolism; UMP biosynthesis via de novo pathway; orotate from (S)-dihydroorotate (quinone route): step 1/1. Functionally, catalyzes the conversion of dihydroorotate to orotate with quinone as electron acceptor. This chain is Dihydroorotate dehydrogenase (quinone), found in Methylibium petroleiphilum (strain ATCC BAA-1232 / LMG 22953 / PM1).